Here is a 45-residue protein sequence, read N- to C-terminus: Photosystem I reaction center subunit IX 1 (45 aa).

The helical transmembrane segment at 9 to 29 (WFRSAPVVATIWITLTAGIIV) threads the bilayer.

The protein belongs to the PsaJ family.

Its subcellular location is the cellular thylakoid membrane. Its function is as follows. May help in the organization of the PsaE and PsaF subunits. The chain is Photosystem I reaction center subunit IX 1 from Prochlorococcus marinus (strain NATL1A).